Reading from the N-terminus, the 399-residue chain is Cell division protein DivIB (399 aa).

Disordered stretches follow at residues 1–23 (MSKDKKNEDKETLEELKELSEWQ) and 35–119 (EEEA…ATKE). Residues 1 to 133 (MSKDKKNEDK…AKIPGIHILR (133 aa)) are Cytoplasmic-facing. 2 stretches are compositionally biased toward basic and acidic residues: residues 35 to 65 (EEEAALAEEKEKERQARMGEESEKSEDKQDQ) and 75 to 119 (ESAK…ATKE). Residues 134 to 154 (AFTILFPSLLLLFVSAYLLSP) form a helical membrane-spanning segment. Topologically, residues 155 to 399 (YATMKDIRVE…NQTTQRSSRR (245 aa)) are extracellular. Positions 156–226 (ATMKDIRVEG…TKFTIKVKEY (71 aa)) constitute a POTRA domain. Residues 364 to 388 (KAKQEAKEAEKKQEEEQKKQEEESN) show a composition bias toward basic and acidic residues. Residues 364-399 (KAKQEAKEAEKKQEEEQKKQEEESNRNQTTQRSSRR) form a disordered region. Polar residues predominate over residues 389-399 (RNQTTQRSSRR).

It belongs to the FtsQ/DivIB family. DivIB subfamily.

The protein localises to the cell membrane. Functionally, cell division protein that may be involved in stabilizing or promoting the assembly of the division complex. The polypeptide is Cell division protein DivIB (Streptococcus pneumoniae serotype 4 (strain ATCC BAA-334 / TIGR4)).